Consider the following 84-residue polypeptide: Large ribosomal subunit protein bL27 (84 aa).

Residues 1–22 are disordered; sequence MAHKKAGGSTRNGRDSESKRLG.

The protein belongs to the bacterial ribosomal protein bL27 family.

The sequence is that of Large ribosomal subunit protein bL27 from Shewanella frigidimarina (strain NCIMB 400).